The primary structure comprises 72 residues: Small ribosomal subunit protein bS20 (72 aa).

The protein belongs to the bacterial ribosomal protein bS20 family.

Binds directly to 16S ribosomal RNA. The protein is Small ribosomal subunit protein bS20 (rpsT) of Aeromonas salmonicida.